A 598-amino-acid polypeptide reads, in one-letter code: Elongation factor 4 (598 aa).

Positions 4-186 (SHIRNFSIIA…VIVNKIPPPE (183 aa)) constitute a tr-type G domain. GTP contacts are provided by residues 16–21 (DHGKST) and 133–136 (NKID).

It belongs to the TRAFAC class translation factor GTPase superfamily. Classic translation factor GTPase family. LepA subfamily.

The protein resides in the cell inner membrane. The catalysed reaction is GTP + H2O = GDP + phosphate + H(+). Required for accurate and efficient protein synthesis under certain stress conditions. May act as a fidelity factor of the translation reaction, by catalyzing a one-codon backward translocation of tRNAs on improperly translocated ribosomes. Back-translocation proceeds from a post-translocation (POST) complex to a pre-translocation (PRE) complex, thus giving elongation factor G a second chance to translocate the tRNAs correctly. Binds to ribosomes in a GTP-dependent manner. The sequence is that of Elongation factor 4 from Alteromonas mediterranea (strain DSM 17117 / CIP 110805 / LMG 28347 / Deep ecotype).